Consider the following 103-residue polypeptide: Histone H4 (103 aa).

A compositionally biased stretch (gly residues) spans 1–14 (MSGRGKGGKGLGKG). Positions 1–20 (MSGRGKGGKGLGKGGAKRHR) are disordered. Residues 17–21 (KRHRK) mediate DNA binding.

This sequence belongs to the histone H4 family. As to quaternary structure, the nucleosome is a histone octamer containing two molecules each of H2A, H2B, H3 and H4 assembled in one H3-H4 heterotetramer and two H2A-H2B heterodimers. The octamer wraps approximately 147 bp of DNA.

The protein resides in the nucleus. Its subcellular location is the chromosome. Its function is as follows. Core component of nucleosome. Nucleosomes wrap and compact DNA into chromatin, limiting DNA accessibility to the cellular machineries which require DNA as a template. Histones thereby play a central role in transcription regulation, DNA repair, DNA replication and chromosomal stability. DNA accessibility is regulated via a complex set of post-translational modifications of histones, also called histone code, and nucleosome remodeling. This is Histone H4 (H41) from Physarum polycephalum (Slime mold).